The following is a 167-amino-acid chain: SAR-endolysin (167 aa).

A helical; Signal-anchor for type II membrane protein transmembrane segment spans residues valine 11 to glycine 31. Active-site proton donor/acceptor residues include glutamate 37 and aspartate 46.

Belongs to the glycosyl hydrolase 24 family.

It is found in the host cell inner membrane. The catalysed reaction is Hydrolysis of (1-&gt;4)-beta-linkages between N-acetylmuramic acid and N-acetyl-D-glucosamine residues in a peptidoglycan and between N-acetyl-D-glucosamine residues in chitodextrins.. Its function is as follows. Signal-arrest-release (SAR) endolysin with lysozyme activity that degrades host peptidoglycans and participates with the pinholin and spanin proteins in the sequential events which lead to programmed host cell lysis releasing the mature viral particles. Once the pinholin has permeabilized the host cell membrane, the SAR-endolysin is released into the periplasm where it breaks down the peptidoglycan layer. The polypeptide is SAR-endolysin (19) (Bacteriophage PS34).